The following is a 145-amino-acid chain: Holo-[acyl-carrier-protein] synthase (145 aa).

Asp-8 and Glu-59 together coordinate Mg(2+).

The protein belongs to the P-Pant transferase superfamily. AcpS family. It depends on Mg(2+) as a cofactor.

It is found in the cytoplasm. The enzyme catalyses apo-[ACP] + CoA = holo-[ACP] + adenosine 3',5'-bisphosphate + H(+). Its function is as follows. Transfers the 4'-phosphopantetheine moiety from coenzyme A to a Ser of acyl-carrier-protein. In Granulibacter bethesdensis (strain ATCC BAA-1260 / CGDNIH1), this protein is Holo-[acyl-carrier-protein] synthase.